Consider the following 985-residue polypeptide: UPF0182 protein cgR_0895 (985 aa).

The next 7 membrane-spanning stretches (helical) occupy residues 19-39 (VTWIFAIIALIILIAPMSVGF), 63-83 (IVLFVIFALIAGFVTWLAGYF), 115-135 (VMVLIPIFVALLAGLIGQRSW), 176-196 (SMMLIVAFLIALVGHYLMGGI), 215-235 (TQLAVTAGLWMLVKVAGYWLD), 262-282 (KIILLVIALFVAIAFFSAIFL), and 290-310 (LAVVLMLLSSVIIGAAWPLML). The interval 906 to 944 (AQDIEEVDGTTTTPSTDETDTDTDQPATETPTAPVSEAE) is disordered. Positions 929-939 (DQPATETPTAP) are enriched in low complexity.

It belongs to the UPF0182 family.

The protein localises to the cell membrane. In Corynebacterium glutamicum (strain R), this protein is UPF0182 protein cgR_0895.